The chain runs to 670 residues: UvrABC system protein B (670 aa).

Positions 51–433 (EGLKKREQFQ…SARIVEQIIR (383 aa)) constitute a Helicase ATP-binding domain. 64–71 (GVTGSGKT) provides a ligand contact to ATP. A Beta-hairpin motif is present at residues 117–140 (YYDYYQPESYLPAKDQYIEKDAQI). A Helicase C-terminal domain is found at 453-612 (DVMQEIRKIV…IVPKTIRKPI (160 aa)). The UVR domain maps to 631-666 (PNVIIELDAEMREAADRLDFERAIQLRELIKKLEKE).

It belongs to the UvrB family. As to quaternary structure, forms a heterotetramer with UvrA during the search for lesions. Interacts with UvrC in an incision complex.

The protein resides in the cytoplasm. Its function is as follows. The UvrABC repair system catalyzes the recognition and processing of DNA lesions. A damage recognition complex composed of 2 UvrA and 2 UvrB subunits scans DNA for abnormalities. Upon binding of the UvrA(2)B(2) complex to a putative damaged site, the DNA wraps around one UvrB monomer. DNA wrap is dependent on ATP binding by UvrB and probably causes local melting of the DNA helix, facilitating insertion of UvrB beta-hairpin between the DNA strands. Then UvrB probes one DNA strand for the presence of a lesion. If a lesion is found the UvrA subunits dissociate and the UvrB-DNA preincision complex is formed. This complex is subsequently bound by UvrC and the second UvrB is released. If no lesion is found, the DNA wraps around the other UvrB subunit that will check the other stand for damage. The sequence is that of UvrABC system protein B from Methanosarcina acetivorans (strain ATCC 35395 / DSM 2834 / JCM 12185 / C2A).